We begin with the raw amino-acid sequence, 119 residues long: Large ribosomal subunit protein bL19 (119 aa).

This sequence belongs to the bacterial ribosomal protein bL19 family.

In terms of biological role, this protein is located at the 30S-50S ribosomal subunit interface and may play a role in the structure and function of the aminoacyl-tRNA binding site. The chain is Large ribosomal subunit protein bL19 (rplS) from Mycoplasma pneumoniae (strain ATCC 29342 / M129 / Subtype 1) (Mycoplasmoides pneumoniae).